The following is a 251-amino-acid chain: uncharacterized protein (251 aa).

Position 12–21 (12–21 (TGASSQGDIG)) interacts with NADP(+). Ser-148 lines the substrate pocket. The active-site Proton acceptor is the Tyr-161.

The protein belongs to the short-chain dehydrogenases/reductases (SDR) family.

This is an uncharacterized protein from Bacillus subtilis (strain 168).